A 1061-amino-acid chain; its full sequence is RecBCD enzyme subunit RecC (1061 aa).

Belongs to the RecC family. As to quaternary structure, heterotrimer of RecB, RecC and RecD. All subunits contribute to DNA-binding.

Its function is as follows. A helicase/nuclease that prepares dsDNA breaks (DSB) for recombinational DNA repair. Binds to DSBs and unwinds DNA via a highly rapid and processive ATP-dependent bidirectional helicase activity. Unwinds dsDNA until it encounters a Chi (crossover hotspot instigator) sequence from the 3' direction. Cuts ssDNA a few nucleotides 3' to the Chi site. The properties and activities of the enzyme are changed at Chi. The Chi-altered holoenzyme produces a long 3'-ssDNA overhang and facilitates RecA-binding to the ssDNA for homologous DNA recombination and repair. Holoenzyme degrades any linearized DNA that is unable to undergo homologous recombination. In the holoenzyme this subunit recognizes the wild-type Chi sequence, and when added to isolated RecB increases its ATP-dependent helicase processivity. The protein is RecBCD enzyme subunit RecC of Buchnera aphidicola subsp. Schizaphis graminum (strain Sg).